The sequence spans 411 residues: Probable 26S proteasome regulatory subunit rpn-6.2 (411 aa).

One can recognise a PCI domain in the interval 212 to 381 (YKTSFSYFYE…DTVVIYPKAG (170 aa)).

The protein belongs to the proteasome subunit S9 family. In terms of assembly, component of the lid subcomplex of the 19S proteasome regulatory particle complex (also named PA700 complex). The 26S proteasome consists of a 20S proteasome core and two 19S regulatory subunits.

Component of the lid subcomplex of the 26S proteasome, a multiprotein complex involved in the ATP-dependent degradation of ubiquitinated proteins. In the complex, rpn-6.2 is required for proteasome assembly. The chain is Probable 26S proteasome regulatory subunit rpn-6.2 from Caenorhabditis briggsae.